Consider the following 535-residue polypeptide: Succinate-semialdehyde dehydrogenase, mitochondrial (535 aa).

A mitochondrion-targeting transit peptide spans Met1–Tyr47. Residue Lys126 is modified to N6-acetyllysine; alternate. Residue Lys126 is modified to N6-succinyllysine; alternate. 2 positions are modified to N6-succinyllysine: Lys135 and Lys184. NAD(+) contacts are provided by residues Arg213 and Lys228–Glu231. Residue Arg213 coordinates substrate. Lys265 bears the N6-acetyllysine; alternate mark. Lys265 bears the N6-succinyllysine; alternate mark. Gly284–Gly289 serves as a coordination point for NAD(+). Glu306 serves as the catalytic Proton acceptor. Arg334 contributes to the substrate binding site. Cys340 (nucleophile) is an active-site residue. An intrachain disulfide couples Cys340 to Cys342. N6-acetyllysine is present on Lys365. Residue Lys402 is modified to N6-succinyllysine. Lys411 carries the N6-acetyllysine modification. Residue Ser498 participates in substrate binding. The residue at position 499 (Ser499) is a Phosphoserine.

Belongs to the aldehyde dehydrogenase family. As to quaternary structure, homotetramer.

The protein resides in the mitochondrion. It catalyses the reaction succinate semialdehyde + NAD(+) + H2O = succinate + NADH + 2 H(+). It functions in the pathway amino-acid degradation; 4-aminobutanoate degradation. Its activity is regulated as follows. Redox-regulated. Inhibited under oxydizing conditions. Catalyzes one step in the degradation of the inhibitory neurotransmitter gamma-aminobutyric acid (GABA). This is Succinate-semialdehyde dehydrogenase, mitochondrial (ALDH5A1) from Pan troglodytes (Chimpanzee).